Reading from the N-terminus, the 339-residue chain is Uroporphyrinogen decarboxylase (339 aa).

Substrate is bound by residues Arg-21 to Arg-25, Asp-71, Tyr-147, Ser-202, and His-315.

Belongs to the uroporphyrinogen decarboxylase family. Homodimer.

The protein resides in the cytoplasm. The enzyme catalyses uroporphyrinogen III + 4 H(+) = coproporphyrinogen III + 4 CO2. It participates in porphyrin-containing compound metabolism; protoporphyrin-IX biosynthesis; coproporphyrinogen-III from 5-aminolevulinate: step 4/4. Catalyzes the decarboxylation of four acetate groups of uroporphyrinogen-III to yield coproporphyrinogen-III. The chain is Uroporphyrinogen decarboxylase from Helicobacter acinonychis (strain Sheeba).